The sequence spans 174 residues: Endoribonuclease YbeY (174 aa).

H129, H133, and H139 together coordinate Zn(2+).

It belongs to the endoribonuclease YbeY family. Zn(2+) is required as a cofactor.

The protein localises to the cytoplasm. Single strand-specific metallo-endoribonuclease involved in late-stage 70S ribosome quality control and in maturation of the 3' terminus of the 16S rRNA. The chain is Endoribonuclease YbeY from Lactobacillus acidophilus (strain ATCC 700396 / NCK56 / N2 / NCFM).